The following is a 131-amino-acid chain: Large ribosomal subunit protein bL17 (131 aa).

Belongs to the bacterial ribosomal protein bL17 family. In terms of assembly, part of the 50S ribosomal subunit. Contacts protein L32.

This is Large ribosomal subunit protein bL17 from Janthinobacterium sp. (strain Marseille) (Minibacterium massiliensis).